The primary structure comprises 373 residues: Inhibitor of nuclear factor kappa-B kinase-interacting protein (373 aa).

Residues 1 to 11 show a composition bias toward basic residues; that stretch reads MSEVKSRKKPG. Residues 1-38 are disordered; that stretch reads MSEVKSRKKPGPKVAAPEPEKRSDGRKNPEARGGAGWA. Positions 18-30 are enriched in basic and acidic residues; sequence EPEKRSDGRKNPE. A helical transmembrane segment spans residues 43-59; sequence GLSLLSLATSLGLAWLV. 2 coiled-coil regions span residues 64–257 and 290–325; these read EKFA…DKLS and TERK…LEGI. N-linked (GlcNAc...) asparagine glycosylation occurs at Asn-151.

Post-translationally, N-glycosylated at Asn-151.

It localises to the endoplasmic reticulum membrane. Target of p53/TP53 with pro-apoptotic function. The sequence is that of Inhibitor of nuclear factor kappa-B kinase-interacting protein (Ikbip) from Rattus norvegicus (Rat).